Reading from the N-terminus, the 419-residue chain is Gamma-glutamyl phosphate reductase (419 aa).

Belongs to the gamma-glutamyl phosphate reductase family.

The protein resides in the cytoplasm. The catalysed reaction is L-glutamate 5-semialdehyde + phosphate + NADP(+) = L-glutamyl 5-phosphate + NADPH + H(+). Its pathway is amino-acid biosynthesis; L-proline biosynthesis; L-glutamate 5-semialdehyde from L-glutamate: step 2/2. In terms of biological role, catalyzes the NADPH-dependent reduction of L-glutamate 5-phosphate into L-glutamate 5-semialdehyde and phosphate. The product spontaneously undergoes cyclization to form 1-pyrroline-5-carboxylate. In Bordetella bronchiseptica (strain ATCC BAA-588 / NCTC 13252 / RB50) (Alcaligenes bronchisepticus), this protein is Gamma-glutamyl phosphate reductase.